A 193-amino-acid polypeptide reads, in one-letter code: AP-3 complex subunit sigma-1 (193 aa).

Ser191 is subject to Phosphoserine.

This sequence belongs to the adaptor complexes small subunit family. Adaptor protein complex 3 (AP-3) is a heterotetramer composed of two large adaptins (delta-type subunit AP3D1 and beta-type subunit AP3B1 or AP3B2), a medium adaptin (mu-type subunit AP3M1 or AP3M2) and a small adaptin (sigma-type subunit APS1 or AP3S2). Interacts with AGAP1. AP-3 associates with the BLOC-1 complex.

Its subcellular location is the golgi apparatus. It localises to the cytoplasmic vesicle membrane. Part of the AP-3 complex, an adaptor-related complex which is not clathrin-associated. The complex is associated with the Golgi region as well as more peripheral structures. It facilitates the budding of vesicles from the Golgi membrane and may be directly involved in trafficking to lysosomes. In concert with the BLOC-1 complex, AP-3 is required to target cargos into vesicles assembled at cell bodies for delivery into neurites and nerve terminals. This Bos taurus (Bovine) protein is AP-3 complex subunit sigma-1 (AP3S1).